The primary structure comprises 416 residues: Acyl-coenzyme A amino acid N-acyltransferase 1 (416 aa).

A Phosphoserine modification is found at Ser-125. Residues Ser-235, Asp-325, and His-359 each act as charge relay system in the active site. Ser-414 carries the post-translational modification Phosphoserine. Positions 414–416 (SKL) match the Microbody targeting signal motif.

It belongs to the C/M/P thioester hydrolase family. Expressed mainly in liver and kidney with low levels in adrenal and little or no expression in other tissues.

Its subcellular location is the peroxisome. The catalysed reaction is tetracosanoyl-CoA + taurine = N-tetracosanoyl-taurine + CoA + H(+). The enzyme catalyses eicosanoyl-CoA + taurine = N-eicosanoyl-taurine + CoA + H(+). It carries out the reaction taurine + octadecanoyl-CoA = N-octadecanoyl-taurine + CoA + H(+). It catalyses the reaction taurine + hexadecanoyl-CoA = N-hexadecanoyl-taurine + CoA + H(+). The catalysed reaction is tetradecanoyl-CoA + taurine = N-tetradecanoyl-taurine + CoA + H(+). The enzyme catalyses dodecanoyl-CoA + taurine = N-dodecanoyl-taurine + CoA + H(+). Functionally, acyltransferase which efficiently conjugates very long-chain and long-chain fatty acids to taurine. Shows no conjugation activity in the presence of glycine. The polypeptide is Acyl-coenzyme A amino acid N-acyltransferase 1 (Mus musculus (Mouse)).